Consider the following 182-residue polypeptide: Large ribosomal subunit protein uL5 (182 aa).

Belongs to the universal ribosomal protein uL5 family. As to quaternary structure, part of the 50S ribosomal subunit; part of the 5S rRNA/L5/L18/L25 subcomplex. Contacts the 5S rRNA and the P site tRNA. Forms a bridge to the 30S subunit in the 70S ribosome.

Functionally, this is one of the proteins that bind and probably mediate the attachment of the 5S RNA into the large ribosomal subunit, where it forms part of the central protuberance. In the 70S ribosome it contacts protein S13 of the 30S subunit (bridge B1b), connecting the 2 subunits; this bridge is implicated in subunit movement. Contacts the P site tRNA; the 5S rRNA and some of its associated proteins might help stabilize positioning of ribosome-bound tRNAs. This Leptospira interrogans serogroup Icterohaemorrhagiae serovar copenhageni (strain Fiocruz L1-130) protein is Large ribosomal subunit protein uL5.